The sequence spans 177 residues: ATP synthase subunit delta (177 aa).

This sequence belongs to the ATPase delta chain family. F-type ATPases have 2 components, F(1) - the catalytic core - and F(0) - the membrane proton channel. F(1) has five subunits: alpha(3), beta(3), gamma(1), delta(1), epsilon(1). F(0) has three main subunits: a(1), b(2) and c(10-14). The alpha and beta chains form an alternating ring which encloses part of the gamma chain. F(1) is attached to F(0) by a central stalk formed by the gamma and epsilon chains, while a peripheral stalk is formed by the delta and b chains.

It localises to the cell inner membrane. In terms of biological role, f(1)F(0) ATP synthase produces ATP from ADP in the presence of a proton or sodium gradient. F-type ATPases consist of two structural domains, F(1) containing the extramembraneous catalytic core and F(0) containing the membrane proton channel, linked together by a central stalk and a peripheral stalk. During catalysis, ATP synthesis in the catalytic domain of F(1) is coupled via a rotary mechanism of the central stalk subunits to proton translocation. Its function is as follows. This protein is part of the stalk that links CF(0) to CF(1). It either transmits conformational changes from CF(0) to CF(1) or is implicated in proton conduction. The protein is ATP synthase subunit delta of Pasteurella multocida (strain Pm70).